Consider the following 129-residue polypeptide: Probable cytochrome b5 2 (129 aa).

Residues 3–79 enclose the Cytochrome b5 heme-binding domain; the sequence is EKTITVEEVL…LEKFYIGNLL (77 aa). The heme site is built by histidine 38 and histidine 62. A helical membrane pass occupies residues 105 to 125; the sequence is VKPAMWLFVLVMVVAYFAFRK.

Belongs to the cytochrome b5 family.

Its subcellular location is the endoplasmic reticulum membrane. It is found in the microsome membrane. The protein resides in the mitochondrion. Its function is as follows. Membrane bound hemoprotein which function as an electron carrier for several membrane bound oxygenases. The chain is Probable cytochrome b5 2 (oca8) from Schizosaccharomyces pombe (strain 972 / ATCC 24843) (Fission yeast).